The primary structure comprises 87 residues: U3-theraphotoxin-Hhn1d (87 aa).

Positions 1–24 are cleaved as a signal peptide; it reads MVNMKASMFLTFAGLVLLFVVCYA. Residues 25–52 constitute a propeptide that is removed on maturation; the sequence is SESEEKEFPKEMLSSIFAVDNDFKQEER. Intrachain disulfides connect cysteine 54–cysteine 67, cysteine 61–cysteine 72, and cysteine 66–cysteine 79.

This sequence belongs to the neurotoxin 10 (Hwtx-1) family. 51 (Hntx-8) subfamily. Hntx-8 sub-subfamily. As to expression, expressed by the venom gland.

It localises to the secreted. Its function is as follows. Ion channel inhibitor. This chain is U3-theraphotoxin-Hhn1d, found in Cyriopagopus hainanus (Chinese bird spider).